A 185-amino-acid polypeptide reads, in one-letter code: Protein FAM219A (185 aa).

Met-1 bears the N-acetylmethionine mark. Residues 1-131 are disordered; the sequence is MMEEIDRFQV…SRYSSSGYSS (131 aa). Ser-47 carries the phosphoserine modification. Residues 52 to 61 show a composition bias toward basic and acidic residues; it reads KLEKQRELAR. Residues 66-80 show a composition bias toward polar residues; it reads KNGSMGSPVNQQPKK. A phosphoserine mark is found at Ser-72 and Ser-102. Phosphothreonine is present on Thr-113. 2 positions are modified to phosphoserine: Ser-115 and Ser-122. Residues 122-131 show a composition bias toward low complexity; it reads SRYSSSGYSS.

The protein belongs to the FAM219 family.

The polypeptide is Protein FAM219A (FAM219A) (Homo sapiens (Human)).